Consider the following 205-residue polypeptide: Outer-membrane lipoprotein carrier protein (205 aa).

Residues 1-19 (MKKIIICFIFVFSINVSFA) form the signal peptide.

This sequence belongs to the LolA family. As to quaternary structure, monomer.

It is found in the periplasm. Functionally, participates in the translocation of lipoproteins from the inner membrane to the outer membrane. Only forms a complex with a lipoprotein if the residue after the N-terminal Cys is not an aspartate (The Asp acts as a targeting signal to indicate that the lipoprotein should stay in the inner membrane). In Francisella tularensis subsp. tularensis (strain FSC 198), this protein is Outer-membrane lipoprotein carrier protein.